We begin with the raw amino-acid sequence, 114 residues long: Small ribosomal subunit protein bS6 (114 aa).

The protein belongs to the bacterial ribosomal protein bS6 family.

In terms of biological role, binds together with bS18 to 16S ribosomal RNA. The chain is Small ribosomal subunit protein bS6 from Protochlamydia amoebophila (strain UWE25).